An 86-amino-acid polypeptide reads, in one-letter code: Heat shock factor-binding protein (86 aa).

Residues 34 to 63 (MSDSIITKIDDMGGRINELEQSINDLRAEM) adopt a coiled-coil conformation. The tract at residues 42–52 (IDDMGGRINEL) is required for interactions with heat shock factors (HSFs). The segment at 59–86 (LRAEMGVEGTPPPASKSGDEPKTPASSS) is disordered.

Belongs to the HSBP1 family. In terms of assembly, homohexamer. Interacts with HSFA1A, HSFA1B and HSFA2. Mostly expressed in siliques and flowers, and, to a lower extent, in roots, stems and leaves.

The protein resides in the nucleus. It localises to the cytoplasm. The protein localises to the cytosol. Negative regulator of the heat shock (HS) response. Affects negatively HSFA1B DNA-binding capacity in vitro. Involved in acquired thermotolerance but not basal thermotolerance. Crucial for seed development, after fertilization and during embryogenesis. This chain is Heat shock factor-binding protein, found in Arabidopsis thaliana (Mouse-ear cress).